Consider the following 188-residue polypeptide: Peptidyl-tRNA hydrolase (188 aa).

Position 15 (Y15) interacts with tRNA. Residue H20 is the Proton acceptor of the active site. TRNA contacts are provided by Y64, N66, and N112.

The protein belongs to the PTH family. In terms of assembly, monomer.

It is found in the cytoplasm. It catalyses the reaction an N-acyl-L-alpha-aminoacyl-tRNA + H2O = an N-acyl-L-amino acid + a tRNA + H(+). Hydrolyzes ribosome-free peptidyl-tRNAs (with 1 or more amino acids incorporated), which drop off the ribosome during protein synthesis, or as a result of ribosome stalling. In terms of biological role, catalyzes the release of premature peptidyl moieties from peptidyl-tRNA molecules trapped in stalled 50S ribosomal subunits, and thus maintains levels of free tRNAs and 50S ribosomes. In Cytophaga hutchinsonii (strain ATCC 33406 / DSM 1761 / CIP 103989 / NBRC 15051 / NCIMB 9469 / D465), this protein is Peptidyl-tRNA hydrolase.